The primary structure comprises 406 residues: Probable endo-xylogalacturonan hydrolase A (406 aa).

The first 18 residues, 1–18 (MLYYRNLALLSLLSLSSA), serve as a signal peptide directing secretion. PbH1 repeat units lie at residues 183–213 (AKDV…DIGS), 214–235 (STHV…ALKP), 237–257 (CNYV…SVGS), and 299–320 (VKNV…QIQS). Aspartate 228 acts as the Proton donor in catalysis. Asparagine 244 is a glycosylation site (N-linked (GlcNAc...) asparagine). The active site involves histidine 251. N-linked (GlcNAc...) asparagine glycosylation is present at asparagine 301.

Belongs to the glycosyl hydrolase 28 family.

It localises to the secreted. In terms of biological role, pectinolytic enzyme involved in the degradation of xylogalacturonan (xga), a galacturonan backbone heavily substituted with xylose, and which is one important component of the hairy regions of pectin. Activity requires a galacturonic acid backbone substituted with xylose. The protein is Probable endo-xylogalacturonan hydrolase A (xghA) of Neosartorya fischeri (strain ATCC 1020 / DSM 3700 / CBS 544.65 / FGSC A1164 / JCM 1740 / NRRL 181 / WB 181) (Aspergillus fischerianus).